The primary structure comprises 541 residues: Cilia- and flagella-associated protein 97 (541 aa).

Phosphoserine is present on residues S8 and S19. Disordered stretches follow at residues 28-47 (ESNS…GINK), 93-296 (ERKA…KQEN), 313-337 (RCVK…VLDA), 406-430 (LSRQ…PPKL), and 495-514 (HYSP…GLSC). Basic and acidic residues-rich tracts occupy residues 35 to 47 (KQND…GINK), 93 to 107 (ERKA…HIEN), and 142 to 151 (RIPKIVKGED). Positions 152–161 (DYYTDGEESS) are enriched in acidic residues. A Phosphothreonine modification is found at T155. S160 and S161 each carry phosphoserine. The segment covering 176–201 (SSNLKKNVSKKYSSSSLSSSSSRSNS) has biased composition (low complexity). Residues 207–218 (GSDRQRRSESHS) are compositionally biased toward basic and acidic residues. Composition is skewed to polar residues over residues 219–232 (SGKC…SSPK) and 240–250 (KSSAQPSSTKQ). S230 carries the post-translational modification Phosphoserine. A Phosphoserine modification is found at S258. Residues 267–277 (PLSTPDVSPAQ) show a composition bias toward polar residues. The segment covering 287-296 (QKVKVKKQEN) has biased composition (basic and acidic residues). Residues 382–459 (RKNYSFTREE…ALLKRLEAVK (78 aa)) adopt a coiled-coil conformation. A compositionally biased stretch (polar residues) spans 503 to 513 (SRTSSATSGLS).

It belongs to the CFAP97 family. Highly expressed in testis with lower levels detected in other tissues including lung, heart and kidney.

In Mus musculus (Mouse), this protein is Cilia- and flagella-associated protein 97.